The following is a 372-amino-acid chain: Glutamate 5-kinase (372 aa).

K14 serves as a coordination point for ATP. S54, D141, and N153 together coordinate substrate. 173–174 (TD) contacts ATP. One can recognise a PUA domain in the interval 280–358 (RGTLTLDEGA…DEIEKLLGYV (79 aa)).

Belongs to the glutamate 5-kinase family.

The protein localises to the cytoplasm. The catalysed reaction is L-glutamate + ATP = L-glutamyl 5-phosphate + ADP. The protein operates within amino-acid biosynthesis; L-proline biosynthesis; L-glutamate 5-semialdehyde from L-glutamate: step 1/2. In terms of biological role, catalyzes the transfer of a phosphate group to glutamate to form L-glutamate 5-phosphate. The sequence is that of Glutamate 5-kinase from Stutzerimonas stutzeri (strain A1501) (Pseudomonas stutzeri).